An 874-amino-acid chain; its full sequence is MSTPTFTVADIRKSFLDFFASKGHTIVESSPLVPGNDPTLMFTNSGMVQFKDVFLGTDKRPYKRATSVQTCLRAGGKHNDLENVGYTARHHTFFEMLGNWSFGDYFKRESLKWAWELLTEVYKLPKERLLATVYAEDDEAYDIWTKEIGLPPERVIRIGDNKGGRYKSDNFWMMADTGPCGPCSEIFYDHGAHVAGGPPGSPDEDGDRFIEIWNNVFMQFDMDEQGNVKPLPAPCVDTGMGLERLAAILQHVHSNYEIDLFQALIKAAARETHIADIETPSLKVIADHIRATAFLVADGVIPSNEGRGYVQRRIVRRAIRHGYKLGQKTPFFHKLVKDLVAVMGDAYPKIREQEARITEVLRVEEERFFETLANGMEILDAALAGGAKVLPGDVAFKLHDTYGFPLDLTNDVCRERGLSVDEAGFQTAMEEQKNKARAAGKFKMDRALEYTGDANAFTGYQKLAEAAKVVALYAEGSAVQELKAGQSGVVVLDTTPFYAESGGQVGDQGVISTAGARFAVEDTLKIKADVFGHHGVLESGSLKVGDAVQAEVDTQLRAATMRNHSVTHIMHKALREVLGDHVQQKGSLVNAERTRFDFAHNQPVTAEEIREIERRVNAEILANTPTDARVMDIESAKATGAMMLFGEKYGDSVRVLDIGSSRELCGGTHVQRTGDIGLFKVVGEGGVAAGVRRIEAVTGENALAYLQSLESTVDQAAAALKAPTAELNTRIGGALEQIRALEKEVAALKGKLASSQGDELAGQAVDVKGIKVLAARLEGADAKTLRDTMDKLKDKLGAAAIVLAAVDGDKVQLAAGVTKAETSRIKAGDLVNFVASQVGGKGGGKPDMAMAGGTDASGLPAALAGVHAWVAERV.

4 residues coordinate Zn(2+): H564, H568, C665, and H669.

This sequence belongs to the class-II aminoacyl-tRNA synthetase family. Requires Zn(2+) as cofactor.

It is found in the cytoplasm. It carries out the reaction tRNA(Ala) + L-alanine + ATP = L-alanyl-tRNA(Ala) + AMP + diphosphate. Catalyzes the attachment of alanine to tRNA(Ala) in a two-step reaction: alanine is first activated by ATP to form Ala-AMP and then transferred to the acceptor end of tRNA(Ala). Also edits incorrectly charged Ser-tRNA(Ala) and Gly-tRNA(Ala) via its editing domain. The polypeptide is Alanine--tRNA ligase (Delftia acidovorans (strain DSM 14801 / SPH-1)).